The chain runs to 311 residues: Telomere-binding protein I1 homolog (311 aa).

This sequence belongs to the chordopoxvirinae I1 family.

Its subcellular location is the virion. Its function is as follows. Late DNA-binding protein which binds to the hairpin form of the viral telomeric sequence. Required for the production of mature virions (MV). The sequence is that of Telomere-binding protein I1 homolog from Fowlpox virus (strain NVSL) (FPV).